Consider the following 276-residue polypeptide: Pantothenate synthetase (276 aa).

27 to 34 is a binding site for ATP; sequence MGALHRGH. Catalysis depends on H34, which acts as the Proton donor. Q58 lines the (R)-pantoate pocket. A beta-alanine-binding site is contributed by Q58. ATP is bound at residue 147-150; the sequence is GKKD. Q153 contributes to the (R)-pantoate binding site. ATP is bound by residues V176 and 184 to 187; that span reads LSSR.

Belongs to the pantothenate synthetase family. As to quaternary structure, homodimer.

The protein resides in the cytoplasm. The enzyme catalyses (R)-pantoate + beta-alanine + ATP = (R)-pantothenate + AMP + diphosphate + H(+). The protein operates within cofactor biosynthesis; (R)-pantothenate biosynthesis; (R)-pantothenate from (R)-pantoate and beta-alanine: step 1/1. Functionally, catalyzes the condensation of pantoate with beta-alanine in an ATP-dependent reaction via a pantoyl-adenylate intermediate. This is Pantothenate synthetase from Helicobacter pylori (strain G27).